The chain runs to 262 residues: Expansin-A7 (262 aa).

Positions 1–30 are cleaved as a signal peptide; the sequence is MGPISSSWSFNKFFSIVFVVFAISGEFVAG. Positions 55–167 constitute an Expansin-like EG45 domain; the sequence is GGACGYGNLF…RRVPCQRSGG (113 aa). 3 disulfides stabilise this stretch: Cys58–Cys86, Cys89–Cys162, and Cys94–Cys100. The 81-residue stretch at 177 to 257 folds into the Expansin-like CBD domain; it reads YWLLIFVMNV…NWSGGKTYKS (81 aa).

It belongs to the expansin family. Expansin A subfamily.

The protein resides in the secreted. The protein localises to the cell wall. Its subcellular location is the membrane. In terms of biological role, causes loosening and extension of plant cell walls by disrupting non-covalent bonding between cellulose microfibrils and matrix glucans. No enzymatic activity has been found. This Arabidopsis thaliana (Mouse-ear cress) protein is Expansin-A7 (EXPA7).